The chain runs to 136 residues: Small ribosomal subunit protein eS17B (136 aa).

It belongs to the eukaryotic ribosomal protein eS17 family. Component of the small ribosomal subunit (SSU). Mature yeast ribosomes consist of a small (40S) and a large (60S) subunit. The 40S small subunit contains 1 molecule of ribosomal RNA (18S rRNA) and 33 different proteins (encoded by 57 genes). The large 60S subunit contains 3 rRNA molecules (25S, 5.8S and 5S rRNA) and 46 different proteins (encoded by 81 genes).

Its subcellular location is the cytoplasm. Functionally, component of the ribosome, a large ribonucleoprotein complex responsible for the synthesis of proteins in the cell. The small ribosomal subunit (SSU) binds messenger RNAs (mRNAs) and translates the encoded message by selecting cognate aminoacyl-transfer RNA (tRNA) molecules. The large subunit (LSU) contains the ribosomal catalytic site termed the peptidyl transferase center (PTC), which catalyzes the formation of peptide bonds, thereby polymerizing the amino acids delivered by tRNAs into a polypeptide chain. The nascent polypeptides leave the ribosome through a tunnel in the LSU and interact with protein factors that function in enzymatic processing, targeting, and the membrane insertion of nascent chains at the exit of the ribosomal tunnel. The sequence is that of Small ribosomal subunit protein eS17B from Saccharomyces cerevisiae (strain ATCC 204508 / S288c) (Baker's yeast).